The primary structure comprises 208 residues: Imidazole glycerol phosphate synthase subunit HisH (208 aa).

A Glutamine amidotransferase type-1 domain is found at 1-206 (MFAIVDYDTG…KEMVSANDFS (206 aa)). The active-site Nucleophile is the Cys-79. Active-site residues include His-181 and Glu-183.

As to quaternary structure, heterodimer of HisH and HisF.

Its subcellular location is the cytoplasm. The catalysed reaction is 5-[(5-phospho-1-deoxy-D-ribulos-1-ylimino)methylamino]-1-(5-phospho-beta-D-ribosyl)imidazole-4-carboxamide + L-glutamine = D-erythro-1-(imidazol-4-yl)glycerol 3-phosphate + 5-amino-1-(5-phospho-beta-D-ribosyl)imidazole-4-carboxamide + L-glutamate + H(+). It catalyses the reaction L-glutamine + H2O = L-glutamate + NH4(+). The protein operates within amino-acid biosynthesis; L-histidine biosynthesis; L-histidine from 5-phospho-alpha-D-ribose 1-diphosphate: step 5/9. Functionally, IGPS catalyzes the conversion of PRFAR and glutamine to IGP, AICAR and glutamate. The HisH subunit catalyzes the hydrolysis of glutamine to glutamate and ammonia as part of the synthesis of IGP and AICAR. The resulting ammonia molecule is channeled to the active site of HisF. This chain is Imidazole glycerol phosphate synthase subunit HisH, found in Lactiplantibacillus plantarum (strain ATCC BAA-793 / NCIMB 8826 / WCFS1) (Lactobacillus plantarum).